A 1218-amino-acid polypeptide reads, in one-letter code: Coatomer subunit alpha-2 (1218 aa).

WD repeat units follow at residues 7–48 (TKSN…DRFD), 49–88 (EHEG…CLFT), 91–132 (GHLD…SVLT), 133–172 (GHNH…KKSA), 202–241 (GHDR…AWEV), 246–285 (GHMN…GIQT), 288–326 (REHD…PAFA), and 363–404 (SLNQ…VGRS). The interval 826–849 (NRGAVDEEEEDVEGDWGEGLDKFD) is disordered. Residues 831–843 (DEEEEDVEGDWGE) show a composition bias toward acidic residues.

As to quaternary structure, oligomeric complex that consists of at least the alpha, beta, beta', gamma, delta, epsilon and zeta subunits.

It localises to the cytoplasm. Its subcellular location is the golgi apparatus membrane. The protein resides in the cytoplasmic vesicle. The protein localises to the COPI-coated vesicle membrane. Its function is as follows. The coatomer is a cytosolic protein complex that binds to dilysine motifs and reversibly associates with Golgi non-clathrin-coated vesicles, which further mediate biosynthetic protein transport from the ER, via the Golgi up to the trans Golgi network. Coatomer complex is required for budding from Golgi membranes, and is essential for the retrograde Golgi-to-ER transport of dilysine-tagged proteins. The chain is Coatomer subunit alpha-2 from Arabidopsis thaliana (Mouse-ear cress).